A 345-amino-acid polypeptide reads, in one-letter code: Phosphoribosylformylglycinamidine cyclo-ligase (345 aa).

It belongs to the AIR synthase family.

It is found in the cytoplasm. It carries out the reaction 2-formamido-N(1)-(5-O-phospho-beta-D-ribosyl)acetamidine + ATP = 5-amino-1-(5-phospho-beta-D-ribosyl)imidazole + ADP + phosphate + H(+). It participates in purine metabolism; IMP biosynthesis via de novo pathway; 5-amino-1-(5-phospho-D-ribosyl)imidazole from N(2)-formyl-N(1)-(5-phospho-D-ribosyl)glycinamide: step 2/2. In Anaeromyxobacter dehalogenans (strain 2CP-C), this protein is Phosphoribosylformylglycinamidine cyclo-ligase.